The primary structure comprises 184 residues: TRAF-interacting protein with FHA domain-containing protein A (184 aa).

Threonine 9 is modified (phosphothreonine). The FHA domain maps to 47–103 (VKFGRNSNMCQYTFQDKQVSRIQFVLQPFKQFNSSVLSFEIKNMSKKTSLMVDNQEL). Residues 152–184 (NNWPTQNPIPEDGMYSSYFTHRSSPSEMDENEL) are disordered. Positions 168–177 (SYFTHRSSPS) are enriched in polar residues.

It belongs to the TIFA family. In terms of assembly, homooligomer; homooligomerizes following phosphorylation at Thr-9. Interacts with IRAK1, TRAF2 and TRAF6. Interacts with TIFAB; binding to TIFAB inhibits TRAF6 activation, possibly by inducing a conformational change in TIFA. Interacts with ZCCHC11; binding to ZCCHC11 suppresses the TRAF6-dependent activation of NF-kappa-B. Phosphorylated at Thr-9 following detection of ADP-D-glycero-beta-D-manno-heptose (ADP-Heptose) by ALPK1. Phosphorylation at Thr-9 by ALPK1 leads to the formation of an intermolecular binding between the FHA domain and phosphorylated Thr-9, promoting TIFA oligomerization and TIFA-mediated NF-kappa-B activation. As to expression, highly expressed in the spleen and at lower levels in heart, brain, lung, liver, kidney and testes.

Its subcellular location is the cytoplasm. Its function is as follows. Adapter molecule that plays a key role in the activation of pro-inflammatory NF-kappa-B signaling following detection of bacterial pathogen-associated molecular pattern metabolites (PAMPs). Promotes activation of an innate immune response by inducing the oligomerization and polyubiquitination of TRAF6, which leads to the activation of TAK1 and IKK through a proteasome-independent mechanism. TIFA-dependent innate immune response is triggered by ADP-D-glycero-beta-D-manno-heptose (ADP-Heptose), a potent PAMP present in all Gram-negative and some Gram-positive bacteria: ADP-Heptose is recognized by ALPK1, which phosphorylates TIFA at Thr-9, leading to TIFA homooligomerization and subsequent activation of pro-inflammatory NF-kappa-B signaling. This chain is TRAF-interacting protein with FHA domain-containing protein A, found in Mus musculus (Mouse).